Reading from the N-terminus, the 625-residue chain is Probable potassium transport system protein Kup 2 (625 aa).

Transmembrane regions (helical) follow at residues Leu10–Leu30, Gly47–Leu67, Val104–Pro124, Pro140–Val160, Phe172–Ile192, Gly214–Leu234, Trp250–Met270, Leu283–Ala303, Trp347–Ala367, Ala369–Val389, Pro396–Val416, and Phe422–Thr442.

This sequence belongs to the HAK/KUP transporter (TC 2.A.72) family.

Its subcellular location is the cell inner membrane. It catalyses the reaction K(+)(in) + H(+)(in) = K(+)(out) + H(+)(out). Transport of potassium into the cell. Likely operates as a K(+):H(+) symporter. The chain is Probable potassium transport system protein Kup 2 from Albidiferax ferrireducens (strain ATCC BAA-621 / DSM 15236 / T118) (Rhodoferax ferrireducens).